We begin with the raw amino-acid sequence, 553 residues long: Cytokine-like nuclear factor N-PAC (553 aa).

A PWWP domain is found at 8 to 66 (LGDLVWGKLGRYPPWPGKIVNPPKDLKKPRGKKCFFVKFFGTEDHAWIKVEQLKPYHAH). Basic and acidic residues-rich tracts occupy residues 92–145 (RAKG…EGKK) and 162–182 (RAQEQSPRKRGRPPKDEKDLS). Residues 92–190 (RAKGKDQTSS…LSIPESSTVK (99 aa)) are disordered. Ser130 bears the Phosphoserine mark. Residue Lys135 forms a Glycyl lysine isopeptide (Lys-Gly) (interchain with G-Cter in SUMO2) linkage. A Phosphoserine modification is found at Ser167. Residues 168–180 (PRKRGRPPKDEKD) constitute a DNA-binding region (a.T hook). Residues Lys176, Lys179, Lys201, and Lys211 each participate in a glycyl lysine isopeptide (Lys-Gly) (interchain with G-Cter in SUMO2) cross-link. The interval 214-217 (DPHF) is interaction with histone H3. An interaction with KDM1B region spans residues 216–225 (HFHHFLLSQT). Residues Lys227, Lys237, Lys240, and Lys269 each participate in a glycyl lysine isopeptide (Lys-Gly) (interchain with G-Cter in SUMO2) cross-link. The interval 261–553 (GSVTPTDKKI…MSAVYRAYIH (293 aa)) is dehydrogenase domain. NAD(+) is bound at residue 271 to 285 (GFLGLGLMGSGIVSN). A Glycyl lysine isopeptide (Lys-Gly) (interchain with G-Cter in SUMO2) cross-link involves residue Lys302. The NAD(+) site is built by Thr362 and Lys505. Residue Ser540 is modified to Phosphoserine.

The protein belongs to the HIBADH-related family. NP60 subfamily. Homotetramere. Interacts with MAPK14. Interacts with KDM1B at nucleosomes; this interaction stimulates H3K4me1 and H3K4me2 demethylation. Binds to mononucleosomes. Interacts with GATA4; the interaction is required for a synergistic activation of GATA4 target genes transcription.

Its subcellular location is the nucleus. The protein localises to the chromosome. In terms of biological role, cytokine-like nuclear factor with chromatin gene reader activity involved in chromatin modification and regulation of gene expression. Acts as a nucleosome-destabilizing factor that is recruited to genes during transcriptional activation. Recognizes and binds histone H3 without a preference for specific epigenetic markers and also binds DNA. Interacts with KDM1B and promotes its histone demethylase activity by facilitating the capture of H3 tails, they form a multifunctional enzyme complex that modifies transcribed chromatin and facilitates Pol II transcription through nucleosomes. Stimulates the acetylation of 'Lys-56' of nucleosomal histone H3 (H3K56ac) by EP300. With GATA4, co-binds a defined set of heart development genes and coregulates their expression during cardiomyocyte differentiation. Regulates p38 MAP kinase activity by mediating stress activation of MAPK14/p38alpha and specifically regulating MAPK14 signaling. Indirectly promotes phosphorylation of MAPK14 and activation of ATF2. The phosphorylation of MAPK14 requires upstream activity of MAP2K4 and MAP2K6. The protein is Cytokine-like nuclear factor N-PAC (GLYR1) of Bos taurus (Bovine).